A 387-amino-acid polypeptide reads, in one-letter code: 17-beta-hydroxysteroid dehydrogenase type 2 (387 aa).

A helical; Signal-anchor for type II membrane protein membrane pass occupies residues 4 to 24 (FFSDTAWICLAVPTVLCGTVF). NAD(+) is bound at residue 82–111 (QKAVLVTGGDCGLGHALCKYLDELGFTVFA). Ser219 contacts substrate. Residue Tyr232 is part of the active site.

Belongs to the short-chain dehydrogenases/reductases (SDR) family. In terms of assembly, homodimer. In terms of tissue distribution, expressed in placenta.

Its subcellular location is the endoplasmic reticulum membrane. It catalyses the reaction 17beta-estradiol + NAD(+) = estrone + NADH + H(+). The enzyme catalyses testosterone + NAD(+) = androst-4-ene-3,17-dione + NADH + H(+). It carries out the reaction 17beta-hydroxy-5alpha-androstan-3-one + NAD(+) = 5alpha-androstan-3,17-dione + NADH + H(+). The catalysed reaction is (20S)-hydroxypregn-4-en-3-one + NAD(+) = progesterone + NADH + H(+). Catalyzes the NAD-dependent oxidation of the highly active 17beta-hydroxysteroids, such as estradiol (E2), testosterone (T), and dihydrotestosterone (DHT), to their less active forms and thus regulates the biological potency of these steroids. Oxidizes estradiol to estrone, testosterone to androstenedione, and dihydrotestosterone to 5alpha-androstan-3,17-dione. Also has 20-alpha-HSD activity. In Homo sapiens (Human), this protein is 17-beta-hydroxysteroid dehydrogenase type 2.